Consider the following 268-residue polypeptide: Interleukin-1 alpha (268 aa).

Residues M1 to R112 constitute a propeptide that is removed on maturation. Position 82 is an N6-acetyllysine (K82). The tract at residues K82–L86 is nuclear localization signal (NLS). Position 87 is a phosphoserine (S87). Residues N102 and N141 are each glycosylated (N-linked (GlcNAc...) asparagine).

Belongs to the IL-1 family. As to quaternary structure, monomer. Interacts with TMED10; the interaction mediates the translocation from the cytoplasm into the ERGIC (endoplasmic reticulum-Golgi intermediate compartment) and thereby secretion. Interacts with IL1R1. Interacts with S100A13; this interaction is the first step in the export of IL1A, followed by direct translocation of this complex across the plasma membrane. In terms of processing, acetylated within its nuclear localization sequence, which impacts subcellular localization. Proteolytic processed by CAPN1 in a calcium-dependent manner. Cleavage from 31 kDa precursor to 18 kDa biologically active molecules. Post-translationally, phosphorylated. Phosphorylation greatly enhances susceptibility to digestion and promotes the conversion of pre-IL1A alpha to the biologically active IL1A.

It is found in the nucleus. Its subcellular location is the cytoplasm. The protein resides in the secreted. Its function is as follows. Cytokine constitutively present intracellularly in nearly all resting non-hematopoietic cells that plays an important role in inflammation and bridges the innate and adaptive immune systems. After binding to its receptor IL1R1 together with its accessory protein IL1RAP, forms the high affinity interleukin-1 receptor complex. Signaling involves the recruitment of adapter molecules such as MYD88, IRAK1 or IRAK4. In turn, mediates the activation of NF-kappa-B and the three MAPK pathways p38, p42/p44 and JNK pathways. Within the cell, acts as an alarmin and cell death results in its liberation in the extracellular space after disruption of the cell membrane to induce inflammation and alert the host to injury or damage. In addition to its role as a danger signal, which occurs when the cytokine is passively released by cell necrosis, directly senses DNA damage and acts as signal for genotoxic stress without loss of cell integrity. This is Interleukin-1 alpha (IL1A) from Bos taurus (Bovine).